A 62-amino-acid polypeptide reads, in one-letter code: Large ribosomal subunit protein bL33 (62 aa).

Belongs to the bacterial ribosomal protein bL33 family.

The protein is Large ribosomal subunit protein bL33 of Porphyromonas gingivalis (strain ATCC 33277 / DSM 20709 / CIP 103683 / JCM 12257 / NCTC 11834 / 2561).